The primary structure comprises 539 residues: Probable 1,4-beta-D-glucan cellobiohydrolase B (539 aa).

A signal peptide spans 1–26 (MLPSTISYRIYKNALFFAALFGAVQA). Residues 27–461 (QKVGTSKAEV…SNIKVGPIGS (435 aa)) form a catalytic region. N-linked (GlcNAc...) asparagine glycosylation is present at N90. E238 functions as the Nucleophile in the catalytic mechanism. The active-site Proton donor is the E243. 2 N-linked (GlcNAc...) asparagine glycosylation sites follow: N296 and N495. Residues 462–503 (TFNSGGSNPGGSTTTTKPATSTTTTKATTTATTNTTGPTGTG) form a thr-rich linker region. Positions 462 to 503 (TFNSGGSNPGGSTTTTKPATSTTTTKATTTATTNTTGPTGTG) are enriched in low complexity. The segment at 462–504 (TFNSGGSNPGGSTTTTKPATSTTTTKATTTATTNTTGPTGTGV) is disordered. A CBM1 domain is found at 503-539 (GVAQPWAQCGGIGYSGPTQCAAPYTCTKQNDYYSQCL). 2 cysteine pairs are disulfide-bonded: C511/C528 and C522/C538.

This sequence belongs to the glycosyl hydrolase 7 (cellulase C) family.

Its subcellular location is the secreted. It catalyses the reaction Hydrolysis of (1-&gt;4)-beta-D-glucosidic linkages in cellulose and cellotetraose, releasing cellobiose from the non-reducing ends of the chains.. In terms of biological role, the biological conversion of cellulose to glucose generally requires three types of hydrolytic enzymes: (1) Endoglucanases which cut internal beta-1,4-glucosidic bonds; (2) Exocellobiohydrolases that cut the disaccharide cellobiose from the non-reducing end of the cellulose polymer chain; (3) Beta-1,4-glucosidases which hydrolyze the cellobiose and other short cello-oligosaccharides to glucose. The sequence is that of Probable 1,4-beta-D-glucan cellobiohydrolase B (cbhB) from Aspergillus clavatus (strain ATCC 1007 / CBS 513.65 / DSM 816 / NCTC 3887 / NRRL 1 / QM 1276 / 107).